Consider the following 1317-residue polypeptide: DNA-directed RNA polymerase subunit beta' (1317 aa).

Cys-60, Cys-62, Cys-75, and Cys-78 together coordinate Zn(2+). Residues Asp-535, Asp-537, and Asp-539 each contribute to the Mg(2+) site. 4 residues coordinate Zn(2+): Cys-890, Cys-967, Cys-974, and Cys-977.

Belongs to the RNA polymerase beta' chain family. The RNAP catalytic core consists of 2 alpha, 1 beta, 1 beta' and 1 omega subunit. When a sigma factor is associated with the core the holoenzyme is formed, which can initiate transcription. The cofactor is Mg(2+). Requires Zn(2+) as cofactor.

It catalyses the reaction RNA(n) + a ribonucleoside 5'-triphosphate = RNA(n+1) + diphosphate. DNA-dependent RNA polymerase catalyzes the transcription of DNA into RNA using the four ribonucleoside triphosphates as substrates. This Nocardia farcinica (strain IFM 10152) protein is DNA-directed RNA polymerase subunit beta'.